Reading from the N-terminus, the 113-residue chain is Prefoldin subunit beta (113 aa).

It belongs to the prefoldin subunit beta family. In terms of assembly, heterohexamer of two alpha and four beta subunits.

The protein resides in the cytoplasm. Its function is as follows. Molecular chaperone capable of stabilizing a range of proteins. Seems to fulfill an ATP-independent, HSP70-like function in archaeal de novo protein folding. The protein is Prefoldin subunit beta of Methanococcus vannielii (strain ATCC 35089 / DSM 1224 / JCM 13029 / OCM 148 / SB).